The primary structure comprises 649 residues: Acetyl-coenzyme A synthetase (649 aa).

Residues 189–192 (RGGK), Thr-311, and Asn-335 contribute to the CoA site. ATP contacts are provided by residues 387–389 (GEP), 411–416 (DTWWQT), Asp-500, and Arg-515. Ser-523 is a binding site for CoA. Arg-526 serves as a coordination point for ATP. Val-537, His-539, and Val-542 together coordinate Mg(2+). Arg-584 is a CoA binding site. N6-acetyllysine is present on Lys-609.

The protein belongs to the ATP-dependent AMP-binding enzyme family. Requires Mg(2+) as cofactor. Acetylated. Deacetylation by the SIR2-homolog deacetylase activates the enzyme.

It carries out the reaction acetate + ATP + CoA = acetyl-CoA + AMP + diphosphate. Its function is as follows. Catalyzes the conversion of acetate into acetyl-CoA (AcCoA), an essential intermediate at the junction of anabolic and catabolic pathways. AcsA undergoes a two-step reaction. In the first half reaction, AcsA combines acetate with ATP to form acetyl-adenylate (AcAMP) intermediate. In the second half reaction, it can then transfer the acetyl group from AcAMP to the sulfhydryl group of CoA, forming the product AcCoA. The polypeptide is Acetyl-coenzyme A synthetase (Rhizobium meliloti (strain 1021) (Ensifer meliloti)).